A 2450-amino-acid polypeptide reads, in one-letter code: Tetratricopeptide repeat protein 28 (2450 aa).

Position 1 is an N-acetylmethionine (Met-1). The disordered stretch occupies residues Met-1–Thr-36. The residue at position 24 (Ser-24) is a Phosphoserine. TPR repeat units follow at residues Phe-52–Asn-85, Ile-87–Trp-119, Pro-120–Ser-153, Phe-190–Ser-223, Gly-228–Leu-261, Cys-268–Leu-301, Ser-308–Ser-341, Ala-348–Leu-381, Ala-388–Leu-421, Met-428–Leu-461, Gly-468–Leu-501, Gly-508–Val-541, Ala-548–Leu-581, Ala-588–Leu-621, Gly-628–Leu-661, Ala-668–Leu-701, Phe-708–Val-741, Ala-748–Leu-781, Cys-788–Leu-821, Ala-828–Leu-861, Gly-871–Leu-904, Ala-911–Leu-944, Ala-951–Met-984, Ser-991–Thr-1024, Gly-1031–Met-1064, Thr-1071–Leu-1104, Ala-1111–Ile-1144, and Thr-1163–Asp-1196. The interval Ser-1362 to Ser-1381 is disordered. Phosphoserine occurs at positions 1584 and 2098. The interval Lys-2001–Leu-2364 is disordered. Over residues Ser-2090–Phe-2116 the composition is skewed to polar residues. Low complexity predominate over residues Ser-2124 to Thr-2140. Residues Ser-2143–Pro-2153 are compositionally biased toward basic and acidic residues. The segment covering Ala-2191 to Phe-2206 has biased composition (polar residues). Position 2216 is a phosphoserine (Ser-2216). The segment covering Ala-2229–Val-2245 has biased composition (polar residues). 2 stretches are compositionally biased toward low complexity: residues Ser-2252–Gly-2262 and Ser-2296–Asp-2320. Ser-2365 and Ser-2370 each carry phosphoserine.

As to quaternary structure, interacts with AURKB. Expressed in embryos at all stages examined. In adult tissues, detected in heart and at low levels in kidney and testis.

Its subcellular location is the cytoplasm. It localises to the cytoskeleton. It is found in the microtubule organizing center. The protein resides in the centrosome. The protein localises to the spindle. Its subcellular location is the spindle pole. It localises to the midbody. Its function is as follows. During mitosis, may be involved in the condensation of spindle midzone microtubules, leading to the formation of midbody. In terms of biological role, essential for the formation and integrity of the midbody. Max play a critical role in the progress of mitosis and cytokinesis during cell cycle. This Mus musculus (Mouse) protein is Tetratricopeptide repeat protein 28 (Ttc28).